The primary structure comprises 308 residues: tRNA dimethylallyltransferase (308 aa).

Residue 9–16 participates in ATP binding; that stretch reads GPTAVGKT. 11-16 is a substrate binding site; sequence TAVGKT. An interaction with substrate tRNA region spans residues 34–37; that stretch reads DSMQ.

It belongs to the IPP transferase family. In terms of assembly, monomer. The cofactor is Mg(2+).

It carries out the reaction adenosine(37) in tRNA + dimethylallyl diphosphate = N(6)-dimethylallyladenosine(37) in tRNA + diphosphate. Its function is as follows. Catalyzes the transfer of a dimethylallyl group onto the adenine at position 37 in tRNAs that read codons beginning with uridine, leading to the formation of N6-(dimethylallyl)adenosine (i(6)A). This chain is tRNA dimethylallyltransferase, found in Lactobacillus delbrueckii subsp. bulgaricus (strain ATCC 11842 / DSM 20081 / BCRC 10696 / JCM 1002 / NBRC 13953 / NCIMB 11778 / NCTC 12712 / WDCM 00102 / Lb 14).